The primary structure comprises 279 residues: Formamidopyrimidine-DNA glycosylase (279 aa).

Pro-2 serves as the catalytic Schiff-base intermediate with DNA. Catalysis depends on Glu-3, which acts as the Proton donor. Lys-57 acts as the Proton donor; for beta-elimination activity in catalysis. Residues His-90, Arg-109, and Arg-151 each contribute to the DNA site. The FPG-type zinc-finger motif lies at 236-270 (FVYGRTGQPCRVCQTPIAVLRLGQRSTFYCPACQQ). The Proton donor; for delta-elimination activity role is filled by Arg-260.

The protein belongs to the FPG family. In terms of assembly, monomer. Zn(2+) is required as a cofactor.

The catalysed reaction is Hydrolysis of DNA containing ring-opened 7-methylguanine residues, releasing 2,6-diamino-4-hydroxy-5-(N-methyl)formamidopyrimidine.. It carries out the reaction 2'-deoxyribonucleotide-(2'-deoxyribose 5'-phosphate)-2'-deoxyribonucleotide-DNA = a 3'-end 2'-deoxyribonucleotide-(2,3-dehydro-2,3-deoxyribose 5'-phosphate)-DNA + a 5'-end 5'-phospho-2'-deoxyribonucleoside-DNA + H(+). Its function is as follows. Involved in base excision repair of DNA damaged by oxidation or by mutagenic agents. Acts as a DNA glycosylase that recognizes and removes damaged bases. Has a preference for oxidized purines, such as 7,8-dihydro-8-oxoguanine (8-oxoG). Has AP (apurinic/apyrimidinic) lyase activity and introduces nicks in the DNA strand. Cleaves the DNA backbone by beta-delta elimination to generate a single-strand break at the site of the removed base with both 3'- and 5'-phosphates. The polypeptide is Formamidopyrimidine-DNA glycosylase (Methylobacillus flagellatus (strain ATCC 51484 / DSM 6875 / VKM B-1610 / KT)).